The primary structure comprises 305 residues: 4-hydroxy-tetrahydrodipicolinate synthase 1 (305 aa).

Residue T53 coordinates pyruvate. Y141 (proton donor/acceptor) is an active-site residue. K169 (schiff-base intermediate with substrate) is an active-site residue. V209 lines the pyruvate pocket.

This sequence belongs to the DapA family. In terms of assembly, homotetramer; dimer of dimers.

The protein resides in the cytoplasm. The enzyme catalyses L-aspartate 4-semialdehyde + pyruvate = (2S,4S)-4-hydroxy-2,3,4,5-tetrahydrodipicolinate + H2O + H(+). Its pathway is amino-acid biosynthesis; L-lysine biosynthesis via DAP pathway; (S)-tetrahydrodipicolinate from L-aspartate: step 3/4. Functionally, catalyzes the condensation of (S)-aspartate-beta-semialdehyde [(S)-ASA] and pyruvate to 4-hydroxy-tetrahydrodipicolinate (HTPA). The chain is 4-hydroxy-tetrahydrodipicolinate synthase 1 from Streptomyces coelicolor (strain ATCC BAA-471 / A3(2) / M145).